Here is a 592-residue protein sequence, read N- to C-terminus: Membrane protein insertase YidC (592 aa).

5 consecutive transmembrane segments (helical) span residues 8–28, 363–385, 430–450, 493–513, and 531–551; these read LFIALGLILVILTGYQMFVMG, ALGQFGLAILALTLMVKIVMFPL, INPLAGCLPILPQIPIFFALY, IWLIGGVLGIGAWPIIMGLTM, and IFAFLPIVFTFILAPFAAGLV.

It belongs to the OXA1/ALB3/YidC family. Type 1 subfamily. As to quaternary structure, interacts with the Sec translocase complex via SecD. Specifically interacts with transmembrane segments of nascent integral membrane proteins during membrane integration.

Its subcellular location is the cell inner membrane. In terms of biological role, required for the insertion and/or proper folding and/or complex formation of integral membrane proteins into the membrane. Involved in integration of membrane proteins that insert both dependently and independently of the Sec translocase complex, as well as at least some lipoproteins. Aids folding of multispanning membrane proteins. In Maricaulis maris (strain MCS10) (Caulobacter maris), this protein is Membrane protein insertase YidC.